We begin with the raw amino-acid sequence, 92 residues long: Small ribosomal subunit protein bS20 (92 aa).

Residues 1–23 (MANSPSAKKRAKQAEKRRSHNAS) are disordered. Over residues 7 to 20 (AKKRAKQAEKRRSH) the composition is skewed to basic residues.

Belongs to the bacterial ribosomal protein bS20 family.

Functionally, binds directly to 16S ribosomal RNA. The sequence is that of Small ribosomal subunit protein bS20 from Pseudomonas fluorescens (strain ATCC BAA-477 / NRRL B-23932 / Pf-5).